A 405-amino-acid polypeptide reads, in one-letter code: Aminodeoxyfutalosine deaminase (405 aa).

His-61 and His-63 together coordinate a divalent metal cation. Residues Glu-141, Ser-145, and His-179 each contribute to the substrate site. A divalent metal cation is bound at residue His-206. The active-site Proton donor is Glu-209. Asp-306 contributes to the a divalent metal cation binding site.

The protein belongs to the metallo-dependent hydrolases superfamily. A divalent metal cation serves as cofactor.

The catalysed reaction is 6-amino-6-deoxyfutalosine + H2O + H(+) = futalosine + NH4(+). Its pathway is quinol/quinone metabolism; menaquinone biosynthesis. Functionally, catalyzes the deamination of aminodeoxyfutalosine (AFL) into futalosine (FL), a step in the biosynthesis of menaquinone (MK, vitamin K2). To a lesser extent, can also deaminate 5'-methylthioadenosine. The sequence is that of Aminodeoxyfutalosine deaminase from Nitratiruptor sp. (strain SB155-2).